The chain runs to 461 residues: tRNA modification GTPase MnmE (461 aa).

The (6S)-5-formyl-5,6,7,8-tetrahydrofolate site is built by arginine 23, glutamate 88, and arginine 127. A TrmE-type G domain is found at 223 to 383 (GLNTVIVGKP…LKECIKNLFF (161 aa)). Asparagine 233 contributes to the K(+) binding site. Residues 233–238 (NVGKSS), 252–258 (TEIPGTT), and 277–280 (DTAG) each bind GTP. A Mg(2+)-binding site is contributed by serine 237. K(+)-binding residues include threonine 252, isoleucine 254, and threonine 257. Mg(2+) is bound at residue threonine 258. Residue lysine 461 participates in (6S)-5-formyl-5,6,7,8-tetrahydrofolate binding.

It belongs to the TRAFAC class TrmE-Era-EngA-EngB-Septin-like GTPase superfamily. TrmE GTPase family. In terms of assembly, homodimer. Heterotetramer of two MnmE and two MnmG subunits. It depends on K(+) as a cofactor.

Its subcellular location is the cytoplasm. Exhibits a very high intrinsic GTPase hydrolysis rate. Involved in the addition of a carboxymethylaminomethyl (cmnm) group at the wobble position (U34) of certain tRNAs, forming tRNA-cmnm(5)s(2)U34. In Clostridium botulinum (strain Langeland / NCTC 10281 / Type F), this protein is tRNA modification GTPase MnmE.